Here is a 73-residue protein sequence, read N- to C-terminus: Sec-independent protein translocase protein TatA (73 aa).

Residues 1 to 21 form a helical membrane-spanning segment; sequence MGSFSIWHWLIVLVIVMLVFG. Residues 44–73 are disordered; it reads KSAEDPNEQIPQSTTTAEKTVDVQAKDINK. Residues 52–61 are compositionally biased toward polar residues; that stretch reads QIPQSTTTAE. The span at 62 to 73 shows a compositional bias: basic and acidic residues; it reads KTVDVQAKDINK.

The protein belongs to the TatA/E family. The Tat system comprises two distinct complexes: a TatABC complex, containing multiple copies of TatA, TatB and TatC subunits, and a separate TatA complex, containing only TatA subunits. Substrates initially bind to the TatABC complex, which probably triggers association of the separate TatA complex to form the active translocon.

Its subcellular location is the cell inner membrane. Functionally, part of the twin-arginine translocation (Tat) system that transports large folded proteins containing a characteristic twin-arginine motif in their signal peptide across membranes. TatA could form the protein-conducting channel of the Tat system. The protein is Sec-independent protein translocase protein TatA of Polynucleobacter asymbioticus (strain DSM 18221 / CIP 109841 / QLW-P1DMWA-1) (Polynucleobacter necessarius subsp. asymbioticus).